A 303-amino-acid chain; its full sequence is ATP phosphoribosyltransferase (303 aa).

Belongs to the ATP phosphoribosyltransferase family. Long subfamily. The cofactor is Mg(2+).

The protein resides in the cytoplasm. The catalysed reaction is 1-(5-phospho-beta-D-ribosyl)-ATP + diphosphate = 5-phospho-alpha-D-ribose 1-diphosphate + ATP. Its pathway is amino-acid biosynthesis; L-histidine biosynthesis; L-histidine from 5-phospho-alpha-D-ribose 1-diphosphate: step 1/9. Its activity is regulated as follows. Feedback inhibited by histidine. Catalyzes the condensation of ATP and 5-phosphoribose 1-diphosphate to form N'-(5'-phosphoribosyl)-ATP (PR-ATP). Has a crucial role in the pathway because the rate of histidine biosynthesis seems to be controlled primarily by regulation of HisG enzymatic activity. The chain is ATP phosphoribosyltransferase from Haemophilus influenzae (strain 86-028NP).